Here is a 406-residue protein sequence, read N- to C-terminus: Succinylornithine transaminase (406 aa).

Residue K252 is modified to N6-(pyridoxal phosphate)lysine.

The protein belongs to the class-III pyridoxal-phosphate-dependent aminotransferase family. AstC subfamily. It depends on pyridoxal 5'-phosphate as a cofactor.

The catalysed reaction is N(2)-succinyl-L-ornithine + 2-oxoglutarate = N-succinyl-L-glutamate 5-semialdehyde + L-glutamate. It participates in amino-acid degradation; L-arginine degradation via AST pathway; L-glutamate and succinate from L-arginine: step 3/5. In terms of biological role, catalyzes the transamination of N(2)-succinylornithine and alpha-ketoglutarate into N(2)-succinylglutamate semialdehyde and glutamate. Can also act as an acetylornithine aminotransferase. In Escherichia coli O139:H28 (strain E24377A / ETEC), this protein is Succinylornithine transaminase.